Consider the following 222-residue polypeptide: Millepora cytotoxin-1 (222 aa).

An N-terminal signal peptide occupies residues 1–20 (MVTLYLHVPILLLVVITARA). Residues 21–75 (APKPDTHNPFDELSSVAEKQDLHYGDRSRKDPFIAQNDVGNNFRDGTQENLTKVR) constitute a propeptide that is removed on maturation. Disulfide bonds link cysteine 89-cysteine 115, cysteine 142-cysteine 168, and cysteine 179-cysteine 222. 3 consecutive repeats follow at residues 100 to 109 (SIHDNHYEDR), 153 to 162 (SIHDNYYEDR), and 206 to 215 (SQHNNYYEDR).

The protein belongs to the dermatopontin family. In terms of processing, is not glycosylated.

Its subcellular location is the secreted. It is found in the nematocyst. In terms of biological role, is potently cytotoxic (EC(50) value 79 ng/mL) towards L1210 mouse leukemia cells, has hemagglutination activity on sheep erythrocytes, and is lethal in crayfish. Has no phospholipase A2 activity. The sequence is that of Millepora cytotoxin-1 from Millepora dichotoma (Net fire coral).